The chain runs to 123 residues: Large ribosomal subunit protein uL14 (123 aa).

Belongs to the universal ribosomal protein uL14 family. Part of the 50S ribosomal subunit. Forms a cluster with proteins L3 and L19. In the 70S ribosome, L14 and L19 interact and together make contacts with the 16S rRNA in bridges B5 and B8.

Binds to 23S rRNA. Forms part of two intersubunit bridges in the 70S ribosome. This chain is Large ribosomal subunit protein uL14, found in Erwinia tasmaniensis (strain DSM 17950 / CFBP 7177 / CIP 109463 / NCPPB 4357 / Et1/99).